The following is a 134-amino-acid chain: Cytochrome b5 (134 aa).

In terms of domain architecture, Cytochrome b5 heme-binding spans 6-82; sequence TKTFTRAEVA…MKKYKIGELV (77 aa). Histidine 41 and histidine 65 together coordinate heme. Positions 86–105 are disordered; sequence RTSVAQKSEPTWSTEQQTEE. Residues 87–105 are compositionally biased toward polar residues; it reads TSVAQKSEPTWSTEQQTEE. A helical membrane pass occupies residues 111–131; the sequence is WLVPLVLCLVATLFYKFFFGG.

It belongs to the cytochrome b5 family.

It is found in the endoplasmic reticulum membrane. It localises to the microsome membrane. Functionally, cytochrome b5 is a membrane-bound hemoprotein which functions as an electron carrier for several membrane-bound oxygenases. This is Cytochrome b5 (Cyt-b5) from Drosophila melanogaster (Fruit fly).